Reading from the N-terminus, the 257-residue chain is Taurine import ATP-binding protein TauB (257 aa).

In terms of domain architecture, ABC transporter spans 6-233; it reads LDKISIHYDG…RYAAGEPIRA (228 aa). 38–45 serves as a coordination point for ATP; the sequence is GRSGCGKT.

Belongs to the ABC transporter superfamily. Taurine importer (TC 3.A.1.17.1) family. In terms of assembly, the complex is composed of two ATP-binding proteins (TauB), two transmembrane proteins (TauC) and a solute-binding protein (TauA).

The protein localises to the cell inner membrane. The enzyme catalyses taurine(out) + ATP + H2O = taurine(in) + ADP + phosphate + H(+). Its function is as follows. Part of the ABC transporter complex TauABC involved in taurine import. Responsible for energy coupling to the transport system. This Mesorhizobium japonicum (strain LMG 29417 / CECT 9101 / MAFF 303099) (Mesorhizobium loti (strain MAFF 303099)) protein is Taurine import ATP-binding protein TauB.